Here is a 415-residue protein sequence, read N- to C-terminus: Levansucrase LscA (415 aa).

The sucrose site is built by Trp45, Asp46, Ala132, Arg202, and Asp203. Residue Asp46 is the Nucleophile of the active site. Catalysis depends on Glu287, which acts as the Proton donor/acceptor.

The protein belongs to the glycosyl hydrolase 68 family.

It is found in the periplasm. The catalysed reaction is [6)-beta-D-fructofuranosyl-(2-&gt;](n) alpha-D-glucopyranoside + sucrose = [6)-beta-D-fructofuranosyl-(2-&gt;](n+1) alpha-D-glucopyranoside + D-glucose. Functionally, catalyzes the synthesis of levan, a fructose polymer, by transferring the fructosyl moiety from sucrose to a growing acceptor molecule. LscA encodes a functional enzyme in vitro, when expressed in E.coli under control of the vector-based lactose promoter (Plac), and it can restore levan production to the lscB-lscC double mutant. However, lscA is not expressed in P.savastanoi pv. glycinea PG4180 under standard conditions. It could be an ancestral Lsc variant in P.syringae. This chain is Levansucrase LscA, found in Pseudomonas savastanoi pv. glycinea (Pseudomonas syringae pv. glycinea).